Reading from the N-terminus, the 418-residue chain is Serine--tRNA ligase (418 aa).

227–229 (TSE) provides a ligand contact to L-serine. ATP contacts are provided by residues 258-260 (RRE) and Val274. L-serine is bound at residue Glu281. 345-348 (ELTS) provides a ligand contact to ATP. An L-serine-binding site is contributed by Thr380.

The protein belongs to the class-II aminoacyl-tRNA synthetase family. Type-1 seryl-tRNA synthetase subfamily. In terms of assembly, homodimer. The tRNA molecule binds across the dimer.

It is found in the cytoplasm. It catalyses the reaction tRNA(Ser) + L-serine + ATP = L-seryl-tRNA(Ser) + AMP + diphosphate + H(+). The catalysed reaction is tRNA(Sec) + L-serine + ATP = L-seryl-tRNA(Sec) + AMP + diphosphate + H(+). Its pathway is aminoacyl-tRNA biosynthesis; selenocysteinyl-tRNA(Sec) biosynthesis; L-seryl-tRNA(Sec) from L-serine and tRNA(Sec): step 1/1. Functionally, catalyzes the attachment of serine to tRNA(Ser). Is also able to aminoacylate tRNA(Sec) with serine, to form the misacylated tRNA L-seryl-tRNA(Sec), which will be further converted into selenocysteinyl-tRNA(Sec). The chain is Serine--tRNA ligase from Rhodococcus jostii (strain RHA1).